The primary structure comprises 320 residues: Ferrochelatase (320 aa).

2 residues coordinate Fe cation: His-194 and Glu-275.

This sequence belongs to the ferrochelatase family. Monomer.

The protein localises to the cytoplasm. It carries out the reaction heme b + 2 H(+) = protoporphyrin IX + Fe(2+). Its pathway is porphyrin-containing compound metabolism; protoheme biosynthesis; protoheme from protoporphyrin-IX: step 1/1. Catalyzes the ferrous insertion into protoporphyrin IX. In Escherichia coli O139:H28 (strain E24377A / ETEC), this protein is Ferrochelatase.